Consider the following 2176-residue polypeptide: Methyl-CpG-binding domain-containing protein 9 (2176 aa).

Residues Met1–Asp13 are compositionally biased toward polar residues. Disordered stretches follow at residues Met1–Lys20 and Gly28–Ser85. A PHD-type 1 zinc finger spans residues Asp83–Gly133. The segment at Cys86 to Arg131 adopts an RING-type 1; degenerate zinc-finger fold. The 70-residue stretch at Arg258–Ser327 folds into the MBD domain. An FYR N-terminal domain is found at Gly403–Gly456. Residues Glu491–Ala511 are a coiled coil. The 149-residue stretch at Ser550–Lys698 folds into the FYR C-terminal domain. Short sequence motifs (nuclear localization signal) lie at residues Ser914–Asp921, Lys1124–Val1131, and Tyr1256–Ser1263. Residues Pro1098–Lys1137 form a Pumilio repeat. The region spanning Ser1130 to Glu1245 is the Bromo domain. The stretch at Gln1251–Ile1273 forms a coiled coil. Residues Glu1287–Ala1337 form a PHD-type 2 zinc finger. The RING-type 2; degenerate zinc-finger motif lies at Cys1290 to Val1335. Residues Ala1337–Ala1344 carry the Nuclear localization signal motif. A coiled-coil region spans residues Gln1410 to Lys1437. Disordered regions lie at residues Gly1472 to Glu1553 and Gly1565 to Gln1595. Polar residues-rich tracts occupy residues Ser1492–Gly1513, Lys1523–Ser1532, and Asp1585–Gln1595. The stretch at Ser1588 to Arg1628 forms a coiled coil. The short motif at Glu1761–Ile1768 is the Nuclear localization signal element. Residues Ile2136 to Ser2176 form a disordered region.

Interacts with histone H4. Expressed in leaves, buds, flowers and stems.

It localises to the nucleus. It carries out the reaction L-lysyl-[protein] + acetyl-CoA = N(6)-acetyl-L-lysyl-[protein] + CoA + H(+). Probable transcriptional regulator that acts as a histone acetyltransferase. Mediates the acetylation of histone H3 and H4 of target loci (e.g. FLC). Involved in an auxin-independent regulation of shoot branching and flowering time. This chain is Methyl-CpG-binding domain-containing protein 9 (MBD9), found in Arabidopsis thaliana (Mouse-ear cress).